We begin with the raw amino-acid sequence, 488 residues long: G-patch domain and KOW motifs-containing protein (488 aa).

Positions 1–11 (MAGRESPPPSA) are enriched in pro residues. Positions 1 to 20 (MAGRESPPPSAPSMAPISFG) are disordered. At Ala2 the chain carries N-acetylalanine. A Phosphoserine; by PKA modification is found at Ser25. Residues 72–97 (IQNGSRRQPLSKNPKPSSETSTVLMS) form a disordered region. Residues 73 to 95 (QNGSRRQPLSKNPKPSSETSTVL) are compositionally biased toward polar residues. Ser115 carries the post-translational modification Phosphoserine. The G-patch domain occupies 164–210 (VEAYGLAMLRGMGWKPGKGIGNTFSQVVKPRVNSIRPKGLGLGANRM). Disordered regions lie at residues 216–241 (ASVG…PQGL) and 295–367 (QEFD…PRNK). Residues 224 to 236 (PRPDGDRENDKEG) show a composition bias toward basic and acidic residues. The region spanning 231-258 (ENDKEGQPQGLMHGRAVVVLSGPYRGLY) is the KOW 1 domain. The span at 307–331 (VSQTSTEQQNRATGTASSLKAAQNQ) shows a compositional bias: polar residues. 2 stretches are compositionally biased toward basic and acidic residues: residues 332–341 (EDSKRRQKGS) and 349–363 (PDRQ…EKAA). The region spanning 401–428 (PDTCVCRTDEGRVLEDVREDMLETLIPK) is the KOW 2 domain. Ser485 carries the post-translational modification Phosphoserine.

Belongs to the MOS2 family. As to quaternary structure, component of the minor spliceosome, which splices U12-type introns. Interacts with PRKX, PRKACB and DHX16. In terms of processing, phosphorylation regulates its ability to bind RNA.

The protein localises to the nucleus. Functionally, RNA-binding protein involved in pre-mRNA splicing. As a component of the minor spliceosome, involved in the splicing of U12-type introns in pre-mRNAs. The protein is G-patch domain and KOW motifs-containing protein (Gpkow) of Mus musculus (Mouse).